The primary structure comprises 466 residues: Vimentin (466 aa).

Low complexity-rich tracts occupy residues Met-1–Arg-13 and Thr-20–Val-31. The disordered stretch occupies residues Met-1 to Val-31. Ser-2 is subject to N-acetylserine. The tract at residues Ser-2–Glu-95 is head. Residue Ser-7 is modified to Phosphoserine; alternate. Ser-7 carries an O-linked (GlcNAc) serine; alternate glycan. Phosphoserine occurs at positions 8, 9, and 10. Phosphothreonine is present on Thr-20. 2 positions are modified to phosphoserine: Ser-25 and Ser-26. Thr-33 carries an O-linked (GlcNAc) threonine glycan. Ser-34 carries O-linked (GlcNAc) serine; alternate glycosylation. Phosphoserine; by PKC; alternate is present on Ser-34. The residue at position 39 (Ser-39) is a Phosphoserine; by CaMK2, PKA, PKC and ROCK2. 4 positions are modified to phosphoserine: Ser-42, Ser-47, Ser-49, and Ser-51. Tyr-53 carries the phosphotyrosine modification. Ser-55 carries the phosphoserine modification. A Phosphoserine; by CDK5 and CDK1 modification is found at Ser-56. Tyr-61 is subject to Phosphotyrosine. Ser-66 is subject to Phosphoserine. Ser-72 is subject to Phosphoserine; by AURKB and ROCK2. A phosphoserine mark is found at Ser-73 and Ser-87. The interval Phe-96–Leu-131 is coil 1A. Positions Phe-96–Leu-131 form a coiled coil. The 309-residue stretch at Glu-103–Ile-411 folds into the IF rod domain. Lys-104 participates in a covalent cross-link: Glycyl lysine isopeptide (Lys-Gly) (interchain with G-Cter in SUMO2). At Tyr-117 the chain carries Phosphotyrosine. 3 positions are modified to N6-acetyllysine; alternate: Lys-120, Lys-129, and Lys-139. An N6-succinyllysine; alternate mark is found at Lys-120 and Lys-129. Residues Lys-120, Lys-129, and Lys-139 each participate in a glycyl lysine isopeptide (Lys-Gly) (interchain with G-Cter in SUMO2); alternate cross-link. The segment at Leu-132–Glu-153 is linker 1. A Phosphoserine modification is found at Ser-144. The stretch at Met-154–Leu-245 forms a coiled coil. The coil 1B stretch occupies residues Met-154–Leu-245. Position 168 is an N6-acetyllysine (Lys-168). Residue Lys-188 is modified to N6-acetyllysine; alternate. The residue at position 188 (Lys-188) is an N6-succinyllysine; alternate. Residue Ser-214 is modified to Phosphoserine. Residue Lys-223 is modified to N6-acetyllysine; alternate. Lys-223 participates in a covalent cross-link: Glycyl lysine isopeptide (Lys-Gly) (interchain with G-Cter in SUMO2); alternate. Phosphoserine is present on Ser-226. Position 235 is an N6-acetyllysine (Lys-235). Positions Gln-246 to Ala-268 are linker 12. Residue Lys-262 forms a Glycyl lysine isopeptide (Lys-Gly) (interchain with G-Cter in SUMO2) linkage. The coil 2 stretch occupies residues Leu-269–Glu-407. Lys-294 is subject to N6-acetyllysine; alternate. Lys-294 carries the post-translational modification N6-succinyllysine; alternate. Lys-294 participates in a covalent cross-link: Glycyl lysine isopeptide (Lys-Gly) (interchain with G-Cter in SUMO2); alternate. Ser-299 is modified (phosphoserine). Residues Asn-303 to Glu-407 are a coiled coil. A Glycyl lysine isopeptide (Lys-Gly) (interchain with G-Cter in SUMO2) cross-link involves residue Lys-313. Phosphoserine is present on Ser-325. The [IL]-x-C-x-x-[DE] motif motif lies at Leu-326 to Glu-329. Residue Lys-373 is modified to N6-acetyllysine; alternate. Lys-373 participates in a covalent cross-link: Glycyl lysine isopeptide (Lys-Gly) (interchain with G-Cter in SUMO2); alternate. The interval Glu-408 to Glu-466 is tail. 4 positions are modified to phosphoserine: Ser-409, Ser-412, Ser-419, and Ser-420. Thr-426 carries the post-translational modification Phosphothreonine. Residue Ser-430 is modified to Phosphoserine. Thr-436 carries the phosphothreonine modification. Position 438 is a phosphoserine (Ser-438). Lys-439 is covalently cross-linked (Glycyl lysine isopeptide (Lys-Gly) (interchain with G-Cter in SUMO2)). The residue at position 445 (Lys-445) is an N6-acetyllysine; alternate. N6-succinyllysine; alternate is present on Lys-445. Residue Lys-445 forms a Glycyl lysine isopeptide (Lys-Gly) (interchain with G-Cter in SUMO2); alternate linkage. Residue Lys-445 forms a Glycyl lysine isopeptide (Lys-Gly) (interchain with G-Cter in SUMO1); alternate linkage. Thr-446 and Thr-458 each carry phosphothreonine. Phosphoserine is present on Ser-459.

The protein belongs to the intermediate filament family. In terms of assembly, homomer assembled from elementary dimers. Identified in complexes that contain VIM, EZR, AHNAK, BFSP1, BFSP2, ANK2, PLEC, PRX and spectrin. Interacts with BCAS3. Interacts with LGSN. Interacts with SYNM. Interacts (via rod region) with PLEC (via CH 1 domain). Interacts with STK33. Interacts with LARP6. Interacts with RAB8B. Interacts with TOR1A; the interaction associates TOR1A with the cytoskeleton. Interacts with TOR1AIP1. Interacts with TOR1AIP1. Interacts with DIAPH1. Interacts with EPPK1; interaction is dependent of higher-order structure of intermediate filament. Interacts with the non-receptor tyrosine kinase SRMS; the interaction leads to phosphorylation of VIM. Interacts with NOD2. Interacts (via head region) with CORO1C. Interacts with HDGF. Interacts with PRKCE (via phorbol-ester/DAG-type 2 domain). Interacts with BFSP2. Interacts with PPL. Interacts with PKP1 and PKP2. Interacts with SCRIB (via PDZ domains); the interaction protects SCRIB from proteasomal degradation and facilitates SCRIB localization to intermediate filaments, the interaction is reduced by cell contact inhibition. One of the most prominent phosphoproteins in various cells of mesenchymal origin. Phosphorylation is enhanced during cell division, at which time vimentin filaments are significantly reorganized. Phosphorylation by PKN1 inhibits the formation of filaments. Filament disassembly during mitosis is promoted by phosphorylation at Ser-55 as well as by nestin. Phosphorylated at Ser-56 by CDK5 during neutrophil secretion in the cytoplasm. Phosphorylated by STK33. Phosphorylated on tyrosine residues by SRMS. In terms of processing, S-nitrosylation is induced by interferon-gamma and oxidatively-modified low-densitity lipoprotein (LDL(ox)) possibly implicating the iNOS-S100A8/9 transnitrosylase complex.

Its subcellular location is the cytoplasm. The protein resides in the cytoskeleton. It is found in the nucleus matrix. The protein localises to the cell membrane. Functionally, vimentins are class-III intermediate filaments found in various non-epithelial cells, especially mesenchymal cells. Vimentin is attached to the nucleus, endoplasmic reticulum, and mitochondria, either laterally or terminally. Plays a role in cell directional movement, orientation, cell sheet organization and Golgi complex polarization at the cell migration front. Protects SCRIB from proteasomal degradation and facilitates its localization to intermediate filaments in a cell contact-mediated manner. Involved with LARP6 in the stabilization of type I collagen mRNAs for CO1A1 and CO1A2. This is Vimentin (VIM) from Sus scrofa (Pig).